Consider the following 277-residue polypeptide: MPWSPGSSSAPSGDKDDIKSKLSSWTKPIRDHLSEGGNWIAPIIAAGATMGFWSFYKTYLRRIPNSAHVSPRYFHRRSLFGKVTSVGDGDGFHLYHTPGGRLAGWGWLRTVPKLKKELKGQTIPIRIAGVDAPEGGHFGRTAQPFAAEAQKFLDSHILNRRVRAYVWRRDQYDRIVATVYVRRPPFFQRKDVSMELLKQGFATTYEAKTGAEFGGPSKEIEYKVAEEVARQKGKGMWSLEKGGGFFHPSKKARAIESPMAYKRRVKLAEEPQRKLDS.

Residues 39 to 56 (WIAPIIAAGATMGFWSFY) traverse the membrane as a helical segment. The TNase-like domain occupies 77–239 (RSLFGKVTSV…RQKGKGMWSL (163 aa)). Residue Arg-126 is part of the active site. Ca(2+) is bound at residue Asp-131. Residues Glu-134 and Arg-174 contribute to the active site.

This sequence belongs to the LCL3 family.

The protein resides in the mitochondrion. It is found in the membrane. The chain is Probable endonuclease LCL3 (LCL3) from Podospora anserina (strain S / ATCC MYA-4624 / DSM 980 / FGSC 10383) (Pleurage anserina).